The chain runs to 595 residues: Protein UL31 (595 aa).

A signal peptide spans Met-1–Ala-40. The interval Thr-47 to Ser-94 is disordered. Over residues Thr-68–Glu-82 the composition is skewed to basic and acidic residues.

This sequence belongs to the herpesviridae U10 family. As to quaternary structure, interacts with host CGAS.

It localises to the host cytoplasm. The protein localises to the host nucleus. Its function is as follows. Plays a role in the inhibition of host innate immune system by targeting host CGAS and promoting dissociation of DNA from CGAS, thereby inhibiting the enzymatic activity of CGAS. The polypeptide is Protein UL31 (UL31) (Human cytomegalovirus (strain Merlin) (HHV-5)).